The primary structure comprises 307 residues: Alpha N-terminal protein methyltransferase 1 (307 aa).

The span at 38–54 (EPAPAPAAGSNGVAGEQ) shows a compositional bias: low complexity. The segment at 38–60 (EPAPAPAAGSNGVAGEQEAGGGG) is disordered. S-adenosyl-L-methionine is bound by residues glycine 123, arginine 128, 145-147 (EPV), 179-180 (LQ), and glutamine 195.

The protein belongs to the methyltransferase superfamily. NTM1 family.

The catalysed reaction is N-terminal L-alanyl-L-prolyl-L-lysyl-[protein] + 3 S-adenosyl-L-methionine = N-terminal N,N,N-trimethyl-L-alanyl-L-prolyl-L-lysyl-[protein] + 3 S-adenosyl-L-homocysteine + 3 H(+). It catalyses the reaction N-terminal L-seryl-L-prolyl-L-lysyl-[protein] + 3 S-adenosyl-L-methionine = N-terminal N,N,N-trimethyl-L-seryl-L-prolyl-L-lysyl-[protein] + 3 S-adenosyl-L-homocysteine + 3 H(+). The enzyme catalyses N-terminal L-prolyl-L-prolyl-L-lysyl-[protein] + 2 S-adenosyl-L-methionine = N-terminal N,N-dimethyl-L-prolyl-L-prolyl-L-lysyl-[protein] + 2 S-adenosyl-L-homocysteine + 2 H(+). Its function is as follows. Alpha-N-methyltransferase that methylates the N-terminus of target proteins containing the N-terminal motif [Ala/Pro/Ser]-Pro-Lys when the initiator Met is cleaved. Specifically catalyzes mono-, di- or tri-methylation of exposed alpha-amino group of Ala or Ser residue in the [Ala/Ser]-Pro-Lys motif and mono- or di-methylation of Pro in the Pro-Pro-Lys motif. The chain is Alpha N-terminal protein methyltransferase 1 from Oryza sativa subsp. indica (Rice).